Consider the following 944-residue polypeptide: Protein translocase subunit SecA (944 aa).

ATP is bound by residues Gln-90, 108 to 112, and Asp-509; that span reads GEGKT. The interval 533–565 is disordered; that stretch reads VKPEEGHKPPVSPQRKTKSAGFKEEKNKNLSIS.

Belongs to the SecA family. Monomer and homodimer. Part of the essential Sec protein translocation apparatus which comprises SecA, SecYEG and auxiliary proteins SecDF. Other proteins may also be involved.

The protein resides in the cell inner membrane. Its subcellular location is the cellular thylakoid membrane. It is found in the cytoplasm. The catalysed reaction is ATP + H2O + cellular proteinSide 1 = ADP + phosphate + cellular proteinSide 2.. In terms of biological role, part of the Sec protein translocase complex. Interacts with the SecYEG preprotein conducting channel. Has a central role in coupling the hydrolysis of ATP to the transfer of proteins into and across the cell membrane, serving as an ATP-driven molecular motor driving the stepwise translocation of polypeptide chains across the membrane. Functionally, probably participates in protein translocation into and across both the cytoplasmic and thylakoid membranes in cyanobacterial cells. This Prochlorococcus marinus (strain NATL1A) protein is Protein translocase subunit SecA.